The sequence spans 245 residues: U11/U12 small nuclear ribonucleoprotein 35 kDa protein (245 aa).

Residues L51–E129 enclose the RRM domain. Basic and acidic residues predominate over residues G146–F162. Residues G146–P165 are disordered. Residue K172 forms a Glycyl lysine isopeptide (Lys-Gly) (interchain with G-Cter in SUMO2) linkage. The tract at residues N173–G222 is disordered. Composition is skewed to basic and acidic residues over residues D174–E185 and R192–A216.

As to quaternary structure, component of the U11/U12 snRNPs that are part of the U12-type spliceosome.

It localises to the nucleus. The protein is U11/U12 small nuclear ribonucleoprotein 35 kDa protein (SNRNP35) of Bos taurus (Bovine).